The following is a 122-amino-acid chain: Small ribosomal subunit protein uS12 (122 aa).

The tract at residues 1-24 is disordered; it reads MPTINQLIRKKRKSTGKKRTAPAL. Over residues 8-20 the composition is skewed to basic residues; the sequence is IRKKRKSTGKKRT. The residue at position 89 (Asp89) is a 3-methylthioaspartic acid.

It belongs to the universal ribosomal protein uS12 family. Part of the 30S ribosomal subunit. Contacts proteins S8 and S17. May interact with IF1 in the 30S initiation complex.

In terms of biological role, with S4 and S5 plays an important role in translational accuracy. Its function is as follows. Interacts with and stabilizes bases of the 16S rRNA that are involved in tRNA selection in the A site and with the mRNA backbone. Located at the interface of the 30S and 50S subunits, it traverses the body of the 30S subunit contacting proteins on the other side and probably holding the rRNA structure together. The combined cluster of proteins S8, S12 and S17 appears to hold together the shoulder and platform of the 30S subunit. The chain is Small ribosomal subunit protein uS12 from Natranaerobius thermophilus (strain ATCC BAA-1301 / DSM 18059 / JW/NM-WN-LF).